A 283-amino-acid chain; its full sequence is 4-diphosphocytidyl-2-C-methyl-D-erythritol kinase (283 aa).

Residue Lys-13 is part of the active site. ATP is bound at residue 96–106 (PMGGGIGGGSS). Asp-138 is an active-site residue.

The protein belongs to the GHMP kinase family. IspE subfamily.

The catalysed reaction is 4-CDP-2-C-methyl-D-erythritol + ATP = 4-CDP-2-C-methyl-D-erythritol 2-phosphate + ADP + H(+). Its pathway is isoprenoid biosynthesis; isopentenyl diphosphate biosynthesis via DXP pathway; isopentenyl diphosphate from 1-deoxy-D-xylulose 5-phosphate: step 3/6. In terms of biological role, catalyzes the phosphorylation of the position 2 hydroxy group of 4-diphosphocytidyl-2C-methyl-D-erythritol. This Pseudomonas fluorescens (strain SBW25) protein is 4-diphosphocytidyl-2-C-methyl-D-erythritol kinase.